A 306-amino-acid polypeptide reads, in one-letter code: MEEVLKLKIPASTANLGVGFDSIGMALDKYLHMSIRKIERSNWEFLYYSSELEGLPKDENNYIYQTALNVAHKYNVTLPSLQIEMRSDIPLARGLGSSASALVGALFIANYFGNIQLSKYELLQLATEIEGHPDNVAPTIYGGLIAGFYNPITKITDVARIEVPHVDIILTIPPYELRTEDSRRVLPDTFSHKGAVQNSAISNTMICALIQHKYKLAGKMMEQDGFHEPYRQHLIPEFNQVRKLSRQHDAYATVISGAGPTILTLCPKEKSGKLVRTLREKINNCASELVTINEIGVKDEVVYLKS.

90-100 (PLARGLGSSAS) contacts ATP.

Belongs to the GHMP kinase family. Homoserine kinase subfamily.

It is found in the cytoplasm. It carries out the reaction L-homoserine + ATP = O-phospho-L-homoserine + ADP + H(+). It functions in the pathway amino-acid biosynthesis; L-threonine biosynthesis; L-threonine from L-aspartate: step 4/5. Functionally, catalyzes the ATP-dependent phosphorylation of L-homoserine to L-homoserine phosphate. The sequence is that of Homoserine kinase from Staphylococcus epidermidis (strain ATCC 12228 / FDA PCI 1200).